We begin with the raw amino-acid sequence, 224 residues long: N-terminal Xaa-Pro-Lys N-methyltransferase 1-A (224 aa).

S-adenosyl-L-methionine is bound by residues G70, R75, 92 to 94 (DVT), 120 to 121 (LQ), and Q136.

Belongs to the methyltransferase superfamily. NTM1 family.

The protein resides in the nucleus. It catalyses the reaction N-terminal L-alanyl-L-prolyl-L-lysyl-[protein] + 3 S-adenosyl-L-methionine = N-terminal N,N,N-trimethyl-L-alanyl-L-prolyl-L-lysyl-[protein] + 3 S-adenosyl-L-homocysteine + 3 H(+). The catalysed reaction is N-terminal L-seryl-L-prolyl-L-lysyl-[protein] + 3 S-adenosyl-L-methionine = N-terminal N,N,N-trimethyl-L-seryl-L-prolyl-L-lysyl-[protein] + 3 S-adenosyl-L-homocysteine + 3 H(+). The enzyme catalyses N-terminal L-prolyl-L-prolyl-L-lysyl-[protein] + 2 S-adenosyl-L-methionine = N-terminal N,N-dimethyl-L-prolyl-L-prolyl-L-lysyl-[protein] + 2 S-adenosyl-L-homocysteine + 2 H(+). Its function is as follows. Distributive alpha-N-methyltransferase that methylates the N-terminus of target proteins containing the N-terminal motif [Ala/Gly/Pro/Ser]-Pro-Lys when the initiator Met is cleaved. Specifically catalyzes mono-, di- or tri-methylation of the exposed alpha-amino group of the Ala, Gly or Ser residue in the [Ala/Gly/Ser]-Pro-Lys motif and mono- or di-methylation of Pro in the Pro-Pro-Lys motif. Required during mitosis for normal bipolar spindle formation and chromosome segregation via its action on target proteins. The polypeptide is N-terminal Xaa-Pro-Lys N-methyltransferase 1-A (ntmt1-a) (Xenopus laevis (African clawed frog)).